The primary structure comprises 481 residues: Endoplasmic reticulum lectin 1 (481 aa).

The N-terminal stretch at 1 to 27 (MRRSDRLRCAGASLLVVLCGVFRSSFG) is a signal peptide. 2 MRH domains span residues 108–245 (SSCS…LCNH) and 340–467 (SYCF…ICKI). 6 disulfide bridges follow: Cys110-Cys123, Cys198-Cys231, Cys214-Cys243, Cys342-Cys355, Cys419-Cys453, and Cys434-Cys465.

Its subcellular location is the endoplasmic reticulum lumen. Its function is as follows. Probable lectin that binds selectively to improperly folded lumenal proteins. May function in endoplasmic reticulum quality control and endoplasmic reticulum-associated degradation (ERAD) of both non-glycosylated proteins and glycoproteins. This chain is Endoplasmic reticulum lectin 1 (erlec1), found in Xenopus tropicalis (Western clawed frog).